A 341-amino-acid polypeptide reads, in one-letter code: Phosphoribosylformylglycinamidine cyclo-ligase (341 aa).

The protein belongs to the AIR synthase family.

It localises to the cytoplasm. It carries out the reaction 2-formamido-N(1)-(5-O-phospho-beta-D-ribosyl)acetamidine + ATP = 5-amino-1-(5-phospho-beta-D-ribosyl)imidazole + ADP + phosphate + H(+). It participates in purine metabolism; IMP biosynthesis via de novo pathway; 5-amino-1-(5-phospho-D-ribosyl)imidazole from N(2)-formyl-N(1)-(5-phospho-D-ribosyl)glycinamide: step 2/2. This chain is Phosphoribosylformylglycinamidine cyclo-ligase, found in Xanthomonas oryzae pv. oryzae (strain MAFF 311018).